The sequence spans 418 residues: Actin-related protein 3 (418 aa).

This sequence belongs to the actin family. ARP3 subfamily. In terms of assembly, component of the Arp2/3 complex composed of actr2/arp2, actr3/arp3, arpc1b, arpc2, arpc3, arpc4 and arpc5.

It localises to the cytoplasm. The protein resides in the cytoskeleton. Its subcellular location is the cell projection. The protein localises to the nucleus. Its function is as follows. ATP-binding component of the Arp2/3 complex, a multiprotein complex that mediates actin polymerization upon stimulation by nucleation-promoting factor (NPF). The Arp2/3 complex mediates the formation of branched actin networks in the cytoplasm, providing the force for cell motility. Seems to contact the pointed end of the daughter actin filament. In addition to its role in the cytoplasmic cytoskeleton, the Arp2/3 complex also promotes actin polymerization in the nucleus, thereby regulating gene transcription and repair of damaged DNA. The Arp2/3 complex promotes homologous recombination (HR) repair in response to DNA damage by promoting nuclear actin polymerization, leading to drive motility of double-strand breaks (DSBs). The protein is Actin-related protein 3 (actr3) of Takifugu rubripes (Japanese pufferfish).